The following is a 760-amino-acid chain: RxLR effector protein PSR2 (760 aa).

An N-terminal signal peptide occupies residues 1–21 (MGCRYAVLALAVAYFAGSIAA). The RxLR-dEER signature appears at 47–62 (RFLRAANTADERNEDR). One copy of the WY1 repeat lies at 87–134 (PLLSWFEKKKSPDYVFLKLKINKGKQQLFDHPDWNVWVQYTTSVVKSD). The interval 87–760 (PLLSWFEKKK…TTKYMERYGQ (674 aa)) is 7 X 93 AA tandem repeats. An LWY2 repeat occupies 135 to 221 (PEEAMIAALR…MKLYNSKPVN (87 aa)). The LWY3 repeat unit spans residues 222–312 (KKQQVTLVSM…KYVDNYNRDF (91 aa)). One copy of the LWY4 repeat lies at 313-403 (PDEATTVMAT…KYVEDLNLKP (91 aa)). An LWY5 repeat occupies 404–496 (EHNDLQVSII…KFLEHYYKSF (93 aa)). Residues 497 to 584 (PTPMMSALAK…RYLDEFNKKF (88 aa)) form an LWY6 repeat. The LWY7 repeat unit spans residues 585-760 (PDEKVSMTDT…TTKYMERYGQ (176 aa)).

Belongs to the RxLR effector family. In terms of assembly, interacts with host dsRNA-binding protein DRB4.

It localises to the secreted. The protein resides in the host cell. In terms of biological role, secreted effector that possesses RNA silencing suppression activity by inhibiting the biogenesis of small RNAs in the host plant to promote enhanced susceptibility of host to the pathogen during infection. Interferes with secondary siRNA production by associating with host dsRNA-binding protein DRB4. Inhibits the host salicylic acid pathway during infection. In Phytophthora infestans (strain T30-4) (Potato late blight agent), this protein is RxLR effector protein PSR2.